Consider the following 347-residue polypeptide: MEESMEEEEMLTYEAMMDDQNHNNWEAAVDSFRQPPPAPPLPPPPPPRPSSSIPDPGRELPGGQLLAVHAGSMDRKGLKEGLPMGSPPLSEPNGVIMMLKSCDAAAAVAKAAPAPTPSSTININTSTSKFLMNVITIEDYKSTYWPKLDGAIDQLLTQSPGDYIPISYEQIYSCVYKCVCQQHSEQMYSDLIKKITSHLERVSKELQASPPDLYIERFNIALGQYMGALQSIVPLFIYMNKFYIETKLNRDLKDDLIKLFTEHVAEKHIYSLMQWVQMAPTLFSKFIPNILPPAVESELSEYAAQDQKLQRELIQNGFTRGDQSRKRAGDELAYNSPSACASSRGYR.

The segment covering M1–L11 has biased composition (acidic residues). Disordered regions lie at residues M1–G63 and R320–R347. Residues Q34–P49 are compositionally biased toward pro residues.

It belongs to the cullin family. Interacts with CDK2.

Cell cycle associated protein capable of promoting cell proliferation through the activation of CDK2 at the G1/S phase transition. The sequence is that of CDK2-associated and cullin domain-containing protein 1 (Cacul1) from Rattus norvegicus (Rat).